The sequence spans 356 residues: tRNA N6-adenosine threonylcarbamoyltransferase (356 aa).

Fe cation is bound by residues His-111 and His-115. Substrate is bound by residues Leu-143 to Gly-147, Asp-178, Gly-191, Asp-195, and Asn-286. Residue Asp-314 participates in Fe cation binding.

The protein belongs to the KAE1 / TsaD family. The cofactor is Fe(2+).

The protein resides in the cytoplasm. The enzyme catalyses L-threonylcarbamoyladenylate + adenosine(37) in tRNA = N(6)-L-threonylcarbamoyladenosine(37) in tRNA + AMP + H(+). Required for the formation of a threonylcarbamoyl group on adenosine at position 37 (t(6)A37) in tRNAs that read codons beginning with adenine. Is involved in the transfer of the threonylcarbamoyl moiety of threonylcarbamoyl-AMP (TC-AMP) to the N6 group of A37, together with TsaE and TsaB. TsaD likely plays a direct catalytic role in this reaction. The protein is tRNA N6-adenosine threonylcarbamoyltransferase of Sorangium cellulosum (strain So ce56) (Polyangium cellulosum (strain So ce56)).